The following is a 110-amino-acid chain: Small nuclear ribonucleoprotein Sm D2 (110 aa).

The region spanning 31-110 (MSLINDAMVT…VIVVLKTPVE (80 aa)) is the Sm domain.

This sequence belongs to the snRNP core protein family. Component of the Sm core complex, present in spliceosomal snRNP U1, U2, U4/U6 and U5. The core complex contains SMB1, SMD1, SMD2, SMD3, SME1, SMX3 and SMX2 (Sm proteins B, D1, D2, D3, E, F and G, respectively), and is probably a heptameric ring structure. Belongs to the CWC complex (or CEF1-associated complex), a spliceosome sub-complex reminiscent of a late-stage spliceosome composed of the U2, U5 and U6 snRNAs and at least BUD13, BUD31, BRR2, CDC40, CEF1, CLF1, CUS1, CWC2, CWC15, CWC21, CWC22, CWC23, CWC24, CWC25, CWC27, ECM2, HSH155, IST3, ISY1, LEA1, MSL1, NTC20, PRP8, PRP9, PRP11, PRP19, PRP21, PRP22, PRP45, PRP46, SLU7, SMB1, SMD1, SMD2, SMD3, SMX2, SMX3, SNT309, SNU114, SPP2, SYF1, SYF2, RSE1 and YJU2. Component of the U4/U6-U5 tri-snRNP complex composed of the U4, U6 and U5 snRNAs and at least PRP3, PRP4, PRP6, PRP8, PRP18, PRP31, PRP38, SNU13, SNU23, SNU66, SNU114, SPP381, SMB1, SMD1, SMD2, SMD3, SMX2, SMX3, LSM2, LSM3, LSM4, LSM5, LSM6, LSM7, LSM8, BRR2 and DIB1.

It localises to the nucleus. Its subcellular location is the cytoplasm. It is found in the cytosol. Functionally, plays a role in pre-mRNA splicing as a core component of the spliceosomal U1, U2, U4 and U5 small nuclear ribonucleoproteins (snRNPs), the building blocks of the spliceosome. The polypeptide is Small nuclear ribonucleoprotein Sm D2 (SMD2) (Saccharomyces cerevisiae (strain ATCC 204508 / S288c) (Baker's yeast)).